The following is a 317-amino-acid chain: 3-oxoacyl-[acyl-carrier-protein] reductase 5, chloroplastic (317 aa).

Residues 1-57 constitute a chloroplast transit peptide; sequence TTVAATKLTSLKATAGKLGYREICQVRQWAPLKSAMPHFGMLRCATSTVVKAQAQAQ. Position 79 to 103 (79 to 103) interacts with NADP(+); it reads VTGASRGIGKAIALSLGKAGCKVLV. Ser-211 lines the substrate pocket. Tyr-224 (proton acceptor) is an active-site residue.

This sequence belongs to the short-chain dehydrogenases/reductases (SDR) family. Homotetramer.

It localises to the plastid. The protein localises to the chloroplast. The enzyme catalyses a (3R)-hydroxyacyl-[ACP] + NADP(+) = a 3-oxoacyl-[ACP] + NADPH + H(+). It functions in the pathway lipid metabolism; fatty acid biosynthesis. This Brassica napus (Rape) protein is 3-oxoacyl-[acyl-carrier-protein] reductase 5, chloroplastic (bkr1).